The sequence spans 61 residues: Metallothionein-1A (61 aa).

Methionine 1 bears the N-acetylmethionine mark. Positions 1 to 29 (MDPNCSCPTGGSCSCAGSCTCKACRCTSC) are beta. Positions 5, 7, 13, 15, 19, 21, 24, 26, 29, 33, 34, 36, 37, 41, 44, 48, 50, and 57 each coordinate a divalent metal cation. Residues 30–61 (KKSCCSCCPAGCARCAQGCICKGASDKCSCCA) form an alpha region. Serine 58 carries the phosphoserine modification. A divalent metal cation contacts are provided by cysteine 59 and cysteine 60.

This sequence belongs to the metallothionein superfamily. Type 1 family. As to quaternary structure, monomer.

In terms of biological role, metallothioneins have a high content of cysteine residues that bind various heavy metals; these proteins are transcriptionally regulated by both heavy metals and glucocorticoids. This chain is Metallothionein-1A (MT1A), found in Sus scrofa (Pig).